Here is a 154-residue protein sequence, read N- to C-terminus: Superoxide dismutase [Cu-Zn] (154 aa).

The Cu cation site is built by histidine 47, histidine 49, and histidine 64. Cysteines 58 and 147 form a disulfide. The segment at 62–89 is disordered; sequence GPHFNPFKKNHGGPTDSERHVGDLGNVK. Residues histidine 64, histidine 72, histidine 81, and aspartate 84 each contribute to the Zn(2+) site. A Cu cation-binding site is contributed by histidine 121. Arginine 144 provides a ligand contact to substrate.

This sequence belongs to the Cu-Zn superoxide dismutase family. In terms of assembly, homodimer. Cu cation serves as cofactor. It depends on Zn(2+) as a cofactor.

The protein localises to the cytoplasm. It carries out the reaction 2 superoxide + 2 H(+) = H2O2 + O2. In terms of biological role, destroys radicals which are normally produced within the cells and which are toxic to biological systems. This Yarrowia lipolytica (strain CLIB 122 / E 150) (Yeast) protein is Superoxide dismutase [Cu-Zn] (SOD1).